The primary structure comprises 179 residues: Large ribosomal subunit protein uL6 (179 aa).

It belongs to the universal ribosomal protein uL6 family. As to quaternary structure, part of the 50S ribosomal subunit.

In terms of biological role, this protein binds to the 23S rRNA, and is important in its secondary structure. It is located near the subunit interface in the base of the L7/L12 stalk, and near the tRNA binding site of the peptidyltransferase center. The chain is Large ribosomal subunit protein uL6 from Geobacter metallireducens (strain ATCC 53774 / DSM 7210 / GS-15).